Consider the following 211-residue polypeptide: Uracil phosphoribosyltransferase (211 aa).

Residues R77, R102, and 129–137 (DPMLATGGS) each bind 5-phospho-alpha-D-ribose 1-diphosphate. Uracil contacts are provided by residues I192 and 197–199 (GDA). Position 198 (D198) interacts with 5-phospho-alpha-D-ribose 1-diphosphate.

It belongs to the UPRTase family. Mg(2+) is required as a cofactor.

It catalyses the reaction UMP + diphosphate = 5-phospho-alpha-D-ribose 1-diphosphate + uracil. The protein operates within pyrimidine metabolism; UMP biosynthesis via salvage pathway; UMP from uracil: step 1/1. Allosterically activated by GTP. Functionally, catalyzes the conversion of uracil and 5-phospho-alpha-D-ribose 1-diphosphate (PRPP) to UMP and diphosphate. The chain is Uracil phosphoribosyltransferase from Corynebacterium diphtheriae (strain ATCC 700971 / NCTC 13129 / Biotype gravis).